The primary structure comprises 88 residues: Small ribosomal subunit protein bS20 (88 aa).

The tract at residues 1-27 is disordered; that stretch reads MANSKSAKKRALQSEKRRQHNASRRSM.

It belongs to the bacterial ribosomal protein bS20 family.

In terms of biological role, binds directly to 16S ribosomal RNA. This is Small ribosomal subunit protein bS20 from Shewanella woodyi (strain ATCC 51908 / MS32).